The sequence spans 142 residues: uncharacterized protein (142 aa).

A signal peptide spans M1–C20. Residue N80 is glycosylated (N-linked (GlcNAc...) asparagine).

This is an uncharacterized protein from Dictyostelium discoideum (Social amoeba).